We begin with the raw amino-acid sequence, 204 residues long: CASP-like protein 2U2 (204 aa).

Residues M1 to K36 lie on the Cytoplasmic side of the membrane. Residues G37 to L57 form a helical membrane-spanning segment. Topologically, residues K58–S84 are extracellular. N-linked (GlcNAc...) asparagine glycosylation is present at N77. The chain crosses the membrane as a helical span at residues L85–L105. At S106–T117 the chain is on the cytoplasmic side. The helical transmembrane segment at V118–A138 threads the bilayer. Topologically, residues A139–H170 are extracellular. The chain crosses the membrane as a helical span at residues F171–I191. The Cytoplasmic portion of the chain corresponds to S192–K204.

The protein belongs to the Casparian strip membrane proteins (CASP) family. In terms of assembly, homodimer and heterodimers.

The protein resides in the cell membrane. The sequence is that of CASP-like protein 2U2 from Selaginella moellendorffii (Spikemoss).